Reading from the N-terminus, the 394-residue chain is Putative FNIP repeat-containing protein R636 (394 aa).

FNIP repeat units follow at residues 126-167 (FNKS…FSVY), 168-207 (FDQP…LYFG), and 210-250 (FNQP…IFEA).

The polypeptide is Putative FNIP repeat-containing protein R636 (Acanthamoeba polyphaga mimivirus (APMV)).